A 101-amino-acid chain; its full sequence is Urease subunit beta (101 aa).

It belongs to the urease beta subunit family. As to quaternary structure, heterotrimer of UreA (gamma), UreB (beta) and UreC (alpha) subunits. Three heterotrimers associate to form the active enzyme.

It is found in the cytoplasm. The catalysed reaction is urea + 2 H2O + H(+) = hydrogencarbonate + 2 NH4(+). Its pathway is nitrogen metabolism; urea degradation; CO(2) and NH(3) from urea (urease route): step 1/1. The polypeptide is Urease subunit beta (Rhizobium meliloti (strain 1021) (Ensifer meliloti)).